The chain runs to 371 residues: Cytochrome b (371 aa).

The next 4 helical transmembrane spans lie at 25 to 45, 69 to 90, 105 to 125, and 170 to 190; these read FGSM…FLAI, WIMQ…YIHI, WLSG…GYVL, and FFAL…IHIM. His75 and His89 together coordinate heme b. The heme b site is built by His174 and His188. His193 contributes to the a ubiquinone binding site. The next 4 helical transmembrane spans lie at 218-238, 280-300, 312-332, and 339-358; these read HKDI…MSFS, LGGT…PFTH, IMQL…WAAT, and FTII…IMNP.

Belongs to the cytochrome b family. As to quaternary structure, the cytochrome bc1 complex contains 3 respiratory subunits (MT-CYB, CYC1 and UQCRFS1), 2 core proteins (UQCRC1 and UQCRC2) and probably 6 low-molecular weight proteins. The cofactor is heme b.

It is found in the mitochondrion inner membrane. Functionally, component of the ubiquinol-cytochrome c reductase complex (complex III or cytochrome b-c1 complex) that is part of the mitochondrial respiratory chain. The b-c1 complex mediates electron transfer from ubiquinol to cytochrome c. Contributes to the generation of a proton gradient across the mitochondrial membrane that is then used for ATP synthesis. The chain is Cytochrome b (MT-CYB) from Coluber constrictor (Eastern racer).